The following is a 151-amino-acid chain: Neuroglobin (151 aa).

The Globin domain occupies 1–149 (MERPEPELIR…VVQAMSRGWD (149 aa)). A disulfide bond links cysteine 46 and cysteine 55. Heme b-binding residues include histidine 64 and histidine 96.

The protein belongs to the globin family. In terms of assembly, monomer. Homodimer and homotetramer; disulfide-linked. Mainly monomeric but also detected as part of homodimers and homotetramers. Interacts with 14-3-3 proteins; regulates the phosphorylation of NGB. Could interact (ferrous form) with G-alpha(i) proteins (GTP-bound form). Post-translationally, phosphorylated during hypoxia by ERK1/ERK2. Phosphorylation regulates the heme pocket hexacoordination preventing the association of His-64 with the heme metal center. Thereby, promotes the access of dioxygen and nitrite to the heme and stimulates the nitrite reductase activity. Phosphorylation during hypoxia is stabilized by 14-3-3 proteins. In terms of processing, an intramolecular Cys-46/Cys-55 disulfide bond, not necessarily present in orthologs, regulates the heme pocket hexacoordination preventing the association of His-64 with the heme metal center. Thereby, promotes the access of dioxygen and nitrite to the heme and stimulates the nitrite reductase activity. Predominantly expressed in brain, the strongest expression is seen in the frontal lobe, the subthalamic nucleus and the thalamus.

It localises to the cytoplasm. The protein localises to the cytosol. Its subcellular location is the mitochondrion matrix. The enzyme catalyses Fe(III)-heme b-[protein] + nitric oxide + H2O = Fe(II)-heme b-[protein] + nitrite + 2 H(+). Functionally, monomeric globin with a bis-histidyl six-coordinate heme-iron atom through which it can bind dioxygen, carbon monoxide and nitric oxide. Could help transport oxygen and increase its availability to the metabolically active neuronal tissues, though its low quantity in tissues as well as its high affinity for dioxygen, which may limit its oxygen-releasing ability, argue against it. The ferrous/deoxygenated form exhibits a nitrite reductase activity and it could produce nitric oxide which in turn inhibits cellular respiration in response to hypoxia. In its ferrous/deoxygenated state, it may also exhibit GDI (Guanine nucleotide Dissociation Inhibitor) activity toward heterotrimeric G-alpha proteins, thereby regulating signal transduction to facilitate neuroprotective responses in the wake of hypoxia and associated oxidative stress. This is Neuroglobin from Homo sapiens (Human).